Here is a 113-residue protein sequence, read N- to C-terminus: Non-specific lipid-transfer protein 6 (113 aa).

Positions 1–19 (MRSLLLAVCLVLALHCGEA) are cleaved as a signal peptide. 4 cysteine pairs are disulfide-bonded: Cys-23/Cys-70, Cys-33/Cys-47, Cys-48/Cys-95, and Cys-68/Cys-109.

Belongs to the plant LTP family.

Plant non-specific lipid-transfer proteins transfer phospholipids as well as galactolipids across membranes. May play a role in wax or cutin deposition in the cell walls of expanding epidermal cells and certain secretory tissues. The polypeptide is Non-specific lipid-transfer protein 6 (LTP6) (Arabidopsis thaliana (Mouse-ear cress)).